A 396-amino-acid polypeptide reads, in one-letter code: Putative arsenical pump-driving ATPase 1 (396 aa).

8–15 (GKGGVGKT) provides a ligand contact to ATP.

Belongs to the arsA ATPase family.

The catalysed reaction is arsenite(in) + ATP + H2O = arsenite(out) + ADP + phosphate + H(+). In terms of biological role, anion-transporting ATPase. Catalyzes the extrusion of arsenite. This Aquifex aeolicus (strain VF5) protein is Putative arsenical pump-driving ATPase 1 (arsA1).